The primary structure comprises 185 residues: Flavodoxin (185 aa).

Residues Val4–Ala159 form the Flavodoxin-like domain.

The protein belongs to the flavodoxin family. The cofactor is FMN.

In terms of biological role, low-potential electron donor to a number of redox enzymes. In Aquifex aeolicus (strain VF5), this protein is Flavodoxin (fldA).